The chain runs to 397 residues: uncharacterized protein (397 aa).

Disordered stretches follow at residues 159-203 and 221-397; these read LNSS…KSTI and NSVK…KTKN. Residues 221 to 240 show a composition bias toward low complexity; it reads NSVKSSPSKSFVSISSPVQS. Composition is skewed to polar residues over residues 285-309 and 320-330; these read TSTL…SSST and VNPNSTSSVTF. The segment at residues 342-371 is a DNA-binding region (zn(2)-C6 fungal-type); sequence CSRCKKSKKGCDRQRPCGRCRDAGLNSEDC. The segment covering 350–363 has biased composition (basic and acidic residues); that stretch reads KGCDRQRPCGRCRD. The segment covering 383-397 has biased composition (basic residues); that stretch reads RKPRGRGRGRPKTKN.

The protein resides in the nucleus. This is an uncharacterized protein from Schizosaccharomyces pombe (strain 972 / ATCC 24843) (Fission yeast).